Consider the following 363-residue polypeptide: S-adenosylmethionine:tRNA ribosyltransferase-isomerase (363 aa).

Belongs to the QueA family. As to quaternary structure, monomer.

It localises to the cytoplasm. It carries out the reaction 7-aminomethyl-7-carbaguanosine(34) in tRNA + S-adenosyl-L-methionine = epoxyqueuosine(34) in tRNA + adenine + L-methionine + 2 H(+). It functions in the pathway tRNA modification; tRNA-queuosine biosynthesis. In terms of biological role, transfers and isomerizes the ribose moiety from AdoMet to the 7-aminomethyl group of 7-deazaguanine (preQ1-tRNA) to give epoxyqueuosine (oQ-tRNA). The sequence is that of S-adenosylmethionine:tRNA ribosyltransferase-isomerase from Pasteurella multocida (strain Pm70).